The sequence spans 705 residues: Elongation factor G (705 aa).

The region spanning glutamate 8 to leucine 294 is the tr-type G domain. GTP is bound by residues alanine 17–threonine 24, aspartate 92–histidine 96, and asparagine 146–aspartate 149.

Belongs to the TRAFAC class translation factor GTPase superfamily. Classic translation factor GTPase family. EF-G/EF-2 subfamily.

It is found in the cytoplasm. In terms of biological role, catalyzes the GTP-dependent ribosomal translocation step during translation elongation. During this step, the ribosome changes from the pre-translocational (PRE) to the post-translocational (POST) state as the newly formed A-site-bound peptidyl-tRNA and P-site-bound deacylated tRNA move to the P and E sites, respectively. Catalyzes the coordinated movement of the two tRNA molecules, the mRNA and conformational changes in the ribosome. This chain is Elongation factor G, found in Cereibacter sphaeroides (strain ATCC 17023 / DSM 158 / JCM 6121 / CCUG 31486 / LMG 2827 / NBRC 12203 / NCIMB 8253 / ATH 2.4.1.) (Rhodobacter sphaeroides).